Here is a 629-residue protein sequence, read N- to C-terminus: ATP-dependent DNA helicase II subunit 2 (629 aa).

The region spanning 254 to 476 (SGLNRKTAVE…GHQIDELMEQ (223 aa)) is the Ku domain. Residues 608–620 (DLETLLKRGEQHS) show a composition bias toward basic and acidic residues. Residues 608-629 (DLETLLKRGEQHSRGSPNNSNN) form a disordered region.

It belongs to the ku80 family. In terms of assembly, heterodimer of YKU70/HDF1 and YKU80/HDF2. Interacts with SIR4.

The protein localises to the nucleus. It is found in the chromosome. It localises to the telomere. It carries out the reaction ATP + H2O = ADP + phosphate + H(+). Single-stranded DNA-dependent ATP-dependent helicase. Involved in non-homologous end joining (NHEJ) DNA double strand break repair. DNA-binding is sequence-independent but has a high affinity to nicks in double-stranded DNA and to the ends of duplex DNA. Binds to naturally occurring chromosomal ends, and therefore provides chromosomal end protection. Appears to have a role in recruitment of telomerase and CDC13 to the telomere and the subsequent telomere elongation. Required also for telomere recombination to repair telomeric ends in the absence of telomerase. KU70, of the KU70/KU80 heterodimer, binds to the stem loop of TLC1, the RNA component of telomerase. Involved in telomere maintenance. Interacts with telomeric repeats and subtelomeric sequences thereby controlling telomere length and protecting against subtelomeric rearrangement. Maintains telomeric chromatin, which is involved in silencing the expression of genes located at the telomere. Required for mating-type switching. The protein is ATP-dependent DNA helicase II subunit 2 (YKU80) of Saccharomyces cerevisiae (strain ATCC 204508 / S288c) (Baker's yeast).